The primary structure comprises 515 residues: Glycosyltransferase family 92 protein F59C6.8 (515 aa).

The chain crosses the membrane as a helical span at residues 18-38 (LFIFIAVCLGFLIAVTILAGL). The GT92 domain maps to 163-456 (RKVVACFSPL…IEVCYNRIFY (294 aa)).

Belongs to the glycosyltransferase 92 family.

It is found in the membrane. The polypeptide is Glycosyltransferase family 92 protein F59C6.8 (Caenorhabditis elegans).